Consider the following 126-residue polypeptide: Small ribosomal subunit protein bS16 (126 aa).

The interval 87–126 (ARSNPEKALPGKRALERVAEKKQKAEDAAAAAAAEASAAE) is disordered. Basic and acidic residues predominate over residues 99–113 (RALERVAEKKQKAED). Residues 114–126 (AAAAAAAEASAAE) show a composition bias toward low complexity.

This sequence belongs to the bacterial ribosomal protein bS16 family.

The sequence is that of Small ribosomal subunit protein bS16 from Agrobacterium fabrum (strain C58 / ATCC 33970) (Agrobacterium tumefaciens (strain C58)).